Here is a 372-residue protein sequence, read N- to C-terminus: Glutamate 5-kinase (372 aa).

Residue K14 coordinates ATP. The substrate site is built by S54, D141, and N153. Position 173 to 174 (173 to 174) interacts with ATP; that stretch reads TD. Residues 280 to 358 form the PUA domain; it reads RGTLVLDDGA…DAIEALLGYV (79 aa).

This sequence belongs to the glutamate 5-kinase family.

The protein resides in the cytoplasm. The catalysed reaction is L-glutamate + ATP = L-glutamyl 5-phosphate + ADP. It participates in amino-acid biosynthesis; L-proline biosynthesis; L-glutamate 5-semialdehyde from L-glutamate: step 1/2. In terms of biological role, catalyzes the transfer of a phosphate group to glutamate to form L-glutamate 5-phosphate. This chain is Glutamate 5-kinase, found in Pseudomonas paraeruginosa (strain DSM 24068 / PA7) (Pseudomonas aeruginosa (strain PA7)).